Here is a 45-residue protein sequence, read N- to C-terminus: Globin, minor monomeric component (45 aa).

Residues 1–45 (GLSAAERQVVASCWKDIAGADXGAGVGKEXLIKFISAAPEMAAVF) enclose the Globin domain.

Belongs to the globin family. In terms of assembly, monomer.

The protein is Globin, minor monomeric component of Glycera dibranchiata (Bloodworm).